The primary structure comprises 171 residues: WYSSMFAANIKEEPMSHHHHHSHHSHGHHHSNSNSNASSPRQSPLPSPNPPSSSNLHLEQYLKQQQQHQQQQQQPMDTPLPLTPPGLPNPMQIIMPANMRPATQPTPTIATPTTTSSAIVALQSNDKLQALTPPMDVTPPKSAAKSQQSWAEPEKDHDLMSNSSEDMKYMA.

Disordered regions lie at residues 14–93 and 124–171; these read PMSH…PMQI and SNDK…KYMA. Positions 17-31 are enriched in basic residues; it reads HHHHHSHHSHGHHHS. 2 stretches are compositionally biased toward low complexity: residues 32 to 42 and 52 to 80; these read NSNSNASSPRQ and SSSN…DTPL. A compositionally biased stretch (basic and acidic residues) spans 152 to 171; sequence EPEKDHDLMSNSSEDMKYMA.

The protein belongs to the hunchback C2H2-type zinc-finger protein family.

The protein resides in the nucleus. Functionally, gap class segmentation protein that controls development of head structures. This chain is Protein hunchback (hb), found in Scaptomyza albovittata (Fruit fly).